A 457-amino-acid chain; its full sequence is Protein N-terminal amidase (457 aa).

Positions 19 to 453 (LKVLVIQLNP…EGAILREVQF (435 aa)) constitute a CN hydrolase domain. The Proton acceptor role is filled by Glu-63. Lys-136 (proton donor) is an active-site residue. Residue Cys-187 is the Nucleophile of the active site.

This sequence belongs to the carbon-nitrogen hydrolase superfamily.

Functionally, deamidates N-terminal Asn and Gln. Component of a targeting complex in the N-end rule pathway. In Saccharomyces cerevisiae (strain ATCC 204508 / S288c) (Baker's yeast), this protein is Protein N-terminal amidase (NTA1).